Consider the following 290-residue polypeptide: 4-hydroxy-tetrahydrodipicolinate synthase (290 aa).

T42 is a binding site for pyruvate. Y129 acts as the Proton donor/acceptor in catalysis. K157 (schiff-base intermediate with substrate) is an active-site residue. I198 lines the pyruvate pocket.

The protein belongs to the DapA family. As to quaternary structure, homotetramer; dimer of dimers.

It localises to the cytoplasm. The enzyme catalyses L-aspartate 4-semialdehyde + pyruvate = (2S,4S)-4-hydroxy-2,3,4,5-tetrahydrodipicolinate + H2O + H(+). It functions in the pathway amino-acid biosynthesis; L-lysine biosynthesis via DAP pathway; (S)-tetrahydrodipicolinate from L-aspartate: step 3/4. In terms of biological role, catalyzes the condensation of (S)-aspartate-beta-semialdehyde [(S)-ASA] and pyruvate to 4-hydroxy-tetrahydrodipicolinate (HTPA). This Chlamydia felis (strain Fe/C-56) (Chlamydophila felis) protein is 4-hydroxy-tetrahydrodipicolinate synthase.